A 453-amino-acid polypeptide reads, in one-letter code: GTPase Der (453 aa).

2 EngA-type G domains span residues 4-169 (PVVA…PPTD) and 178-353 (INVA…EQHR). GTP contacts are provided by residues 10–17 (GRPNVGKS), 57–61 (DTGGL), 120–123 (NKCE), 184–191 (GRPNVGKS), 231–235 (DTAGI), and 296–299 (NKWD). In terms of domain architecture, KH-like spans 354-439 (RRVSTSVINE…PIRLLWRGKK (86 aa)).

It belongs to the TRAFAC class TrmE-Era-EngA-EngB-Septin-like GTPase superfamily. EngA (Der) GTPase family. As to quaternary structure, associates with the 50S ribosomal subunit.

Functionally, GTPase that plays an essential role in the late steps of ribosome biogenesis. This is GTPase Der from Cyanothece sp. (strain PCC 7425 / ATCC 29141).